The primary structure comprises 476 residues: Endonuclease SceI small subunit (476 aa).

The protein belongs to the LAGLIDADG endonuclease family. Endonuclease SceI (Endo.SceI) is a heterodimer of ENS2 and SSC1. Post-translationally, the N-terminus is blocked.

It is found in the mitochondrion. In terms of biological role, catalytic component of endonuclease SceI (Endo.SceI), which cleaves specifically at multiple sites on mitochondrial DNA and produces double-stranded breaks. In Saccharomyces cerevisiae (Baker's yeast), this protein is Endonuclease SceI small subunit (ENS2).